The chain runs to 151 residues: UPF0756 membrane protein GWCH70_2680 (151 aa).

A run of 4 helical transmembrane segments spans residues 5-25 (ILFL…SLMI), 53-73 (WGVT…EIGF), 86-106 (WIAL…VTLL), and 116-136 (LVFG…GPLI).

The protein belongs to the UPF0756 family.

It is found in the cell membrane. The polypeptide is UPF0756 membrane protein GWCH70_2680 (Geobacillus sp. (strain WCH70)).